The sequence spans 487 residues: NGFI-A-binding protein 1 (487 aa).

The tract at residues 4–82 (ALPRTLGELQ…RDWVTNPGLF (79 aa)) is NCD1. Glycyl lysine isopeptide (Lys-Gly) (interchain with G-Cter in SUMO2) cross-links involve residues K126, K129, and K143. The interval 162–188 (QGHHATESEHSLSPADLGSPASPKESS) is disordered. 2 positions are modified to phosphoserine: S172 and S183. Residue K212 forms a Glycyl lysine isopeptide (Lys-Gly) (interchain with G-Cter in SUMO2) linkage. An NCD2 region spans residues 221–310 (LLKTNKKLAK…ARQISREVTY (90 aa)). Residues 307–338 (EVTYKYTYRTTKSKCGERDELSPKRIKVEDGF) form a necessary for nuclear localization region. Position 328 is a phosphoserine (S328). Residue K333 forms a Glycyl lysine isopeptide (Lys-Gly) (interchain with G-Cter in SUMO1); alternate linkage. K333 is covalently cross-linked (Glycyl lysine isopeptide (Lys-Gly) (interchain with G-Cter in SUMO2); alternate). Glycyl lysine isopeptide (Lys-Gly) (interchain with G-Cter in SUMO2) cross-links involve residues K355, K369, and K373. A disordered region spans residues 399–434 (YRQSSEEHSPNGLTSDNSDGQGERPLNLRMPNLQNR). The residue at position 407 (S407) is a Phosphoserine. Polar residues predominate over residues 409–418 (NGLTSDNSDG). Residues K454, K465, and K477 each participate in a glycyl lysine isopeptide (Lys-Gly) (interchain with G-Cter in SUMO2) cross-link. Residue K480 forms a Glycyl lysine isopeptide (Lys-Gly) (interchain with G-Cter in SUMO1); alternate linkage. K480 is covalently cross-linked (Glycyl lysine isopeptide (Lys-Gly) (interchain with G-Cter in SUMO2); alternate).

The protein belongs to the NAB family. In terms of assembly, homomultimers may associate with EGR1 bound to DNA. In terms of tissue distribution, isoform Short is found in myeloid leukemia cell line KG-1.

It localises to the nucleus. Its function is as follows. Acts as a transcriptional repressor for zinc finger transcription factors EGR1 and EGR2. This Homo sapiens (Human) protein is NGFI-A-binding protein 1 (NAB1).